The chain runs to 216 residues: Ribosomal RNA large subunit methyltransferase E (216 aa).

S-adenosyl-L-methionine contacts are provided by Gly-60, Trp-62, Asp-80, Asp-96, and Asp-121. Residue Lys-161 is the Proton acceptor of the active site.

It belongs to the class I-like SAM-binding methyltransferase superfamily. RNA methyltransferase RlmE family.

It is found in the cytoplasm. It catalyses the reaction uridine(2552) in 23S rRNA + S-adenosyl-L-methionine = 2'-O-methyluridine(2552) in 23S rRNA + S-adenosyl-L-homocysteine + H(+). Functionally, specifically methylates the uridine in position 2552 of 23S rRNA at the 2'-O position of the ribose in the fully assembled 50S ribosomal subunit. The sequence is that of Ribosomal RNA large subunit methyltransferase E from Pseudomonas fluorescens (strain SBW25).